The following is a 472-amino-acid chain: Nuclear receptor subfamily 0 group B member 1 (472 aa).

3 tandem repeats follow at residues 1–67 (MAGE…YRCC), 68–135 (FCGE…YRCC), and 136–202 (FCGK…YRSY). The tract at residues 1 to 255 (MAGEDHPWHG…RPIALKDPQV (255 aa)) is 4 X 67 AA tandem repeats. 3 short sequence motifs (LXXLL motif) span residues 13 to 17 (LYNLL), 80 to 84 (LYSML), and 148 to 152 (LYSLL). The 282-residue stretch at 190–471 (QSTQAMAFLY…DMMLEMLCAK (282 aa)) folds into the NR LBD domain. The stretch at 203–255 (VCCEEQPQQSSVASDTPVRADQTPAAPQEQPRAPWWDTSSGVQRPIALKDPQV) is one 4; truncated repeat. Disordered stretches follow at residues 214–237 (VASDTPVRADQTPAAPQEQPRAPW) and 326–345 (RRQETEGPEPADPQATEQPQ). The short motif at 463-468 (MMLEML) is the AF-2 motif element.

Belongs to the nuclear hormone receptor family. NR0 subfamily. As to quaternary structure, homodimer. Interacts with NR5A1, NR5A2, NR0B2 and with COPS2. Interacts with ESRRB; represses ESRRB activity at the GATA6 promoter.

It localises to the nucleus. Its subcellular location is the cytoplasm. Functionally, nuclear receptor that lacks a DNA-binding domain and acts as a corepressor that inhibits the transcriptional activity of other nuclear receptors through heterodimeric interactions. Component of a cascade required for the development of the hypothalamic-pituitary-adrenal-gonadal axis. May also have a role in the development of the embryo and in the maintenance of embryonic stem cell pluripotency. This is Nuclear receptor subfamily 0 group B member 1 (Nr0b1) from Rattus norvegicus (Rat).